The primary structure comprises 216 residues: Co-chaperone protein SBA1 (216 aa).

Ser-2 carries the post-translational modification N-acetylserine. One can recognise a CS domain in the interval 5–108 (VINPQVAWAQ…LESEYWPRLT (104 aa)). Repeats lie at residues 141–156 (AQGM…AGGA) and 160–174 (GGMD…AGGA). Residues 169–216 (GGAGGAGSPDMAQLQQLLAQSGGNLDMGDFKENDEEDEEEEIEPEVKA) are disordered. The span at 200–216 (ENDEEDEEEEIEPEVKA) shows a compositional bias: acidic residues.

The protein belongs to the p23/wos2 family. Interacts with HSP82.

Acts as a co-chaperone. This Saccharomyces cerevisiae (strain ATCC 204508 / S288c) (Baker's yeast) protein is Co-chaperone protein SBA1 (SBA1).